The chain runs to 232 residues: Triosephosphate isomerase (232 aa).

6-8 (NLK) lines the substrate pocket. The Electrophile role is filled by histidine 91. Glutamate 158 functions as the Proton acceptor in the catalytic mechanism. Residues glycine 164 and serine 194 each coordinate substrate.

Belongs to the triosephosphate isomerase family. In terms of assembly, homodimer.

It localises to the cytoplasm. The catalysed reaction is D-glyceraldehyde 3-phosphate = dihydroxyacetone phosphate. It participates in carbohydrate biosynthesis; gluconeogenesis. Its pathway is carbohydrate degradation; glycolysis; D-glyceraldehyde 3-phosphate from glycerone phosphate: step 1/1. Involved in the gluconeogenesis. Catalyzes stereospecifically the conversion of dihydroxyacetone phosphate (DHAP) to D-glyceraldehyde-3-phosphate (G3P). The protein is Triosephosphate isomerase of Campylobacter hominis (strain ATCC BAA-381 / DSM 21671 / CCUG 45161 / LMG 19568 / NCTC 13146 / CH001A).